The primary structure comprises 417 residues: 4-hydroxy-3-methylbut-2-en-1-yl diphosphate synthase (flavodoxin) (417 aa).

C304, C307, C350, and E357 together coordinate [4Fe-4S] cluster.

This sequence belongs to the IspG family. It depends on [4Fe-4S] cluster as a cofactor.

The catalysed reaction is (2E)-4-hydroxy-3-methylbut-2-enyl diphosphate + oxidized [flavodoxin] + H2O + 2 H(+) = 2-C-methyl-D-erythritol 2,4-cyclic diphosphate + reduced [flavodoxin]. It participates in isoprenoid biosynthesis; isopentenyl diphosphate biosynthesis via DXP pathway; isopentenyl diphosphate from 1-deoxy-D-xylulose 5-phosphate: step 5/6. Converts 2C-methyl-D-erythritol 2,4-cyclodiphosphate (ME-2,4cPP) into 1-hydroxy-2-methyl-2-(E)-butenyl 4-diphosphate. This Rhizobium meliloti (strain 1021) (Ensifer meliloti) protein is 4-hydroxy-3-methylbut-2-en-1-yl diphosphate synthase (flavodoxin).